The chain runs to 78 residues: Large ribosomal subunit protein bL31 (78 aa).

This sequence belongs to the bacterial ribosomal protein bL31 family. Type A subfamily. Part of the 50S ribosomal subunit.

Functionally, binds the 23S rRNA. This Rickettsia felis (strain ATCC VR-1525 / URRWXCal2) (Rickettsia azadi) protein is Large ribosomal subunit protein bL31 (rpmE).